A 409-amino-acid chain; its full sequence is Elongation factor Tu (409 aa).

The tr-type G domain occupies 10 to 214; the sequence is KPHVNIGTIG…EVDGYIPQPE (205 aa). Positions 19–26 are G1; that stretch reads GHVDHGKT. 19-26 contacts GTP; sequence GHVDHGKT. T26 lines the Mg(2+) pocket. The G2 stretch occupies residues 60–64; the sequence is GITIN. Positions 81–84 are G3; sequence DCPG. GTP is bound by residues 81–85 and 136–139; these read DCPGH and NKQD. The interval 136-139 is G4; sequence NKQD. A G5 region spans residues 174–176; that stretch reads SAL.

This sequence belongs to the TRAFAC class translation factor GTPase superfamily. Classic translation factor GTPase family. EF-Tu/EF-1A subfamily. Monomer.

Its subcellular location is the cytoplasm. It carries out the reaction GTP + H2O = GDP + phosphate + H(+). Its function is as follows. GTP hydrolase that promotes the GTP-dependent binding of aminoacyl-tRNA to the A-site of ribosomes during protein biosynthesis. This Trichodesmium erythraeum (strain IMS101) protein is Elongation factor Tu.